We begin with the raw amino-acid sequence, 998 residues long: Calcium-transporting ATPase 3, endoplasmic reticulum-type (998 aa).

The Cytoplasmic portion of the chain corresponds to 1–48 (MEDAYARSVSEVLDFFGVDPTKGLSDSQVVHHSRLYGRNVLPEEKRTP). A helical membrane pass occupies residues 49–69 (FWKLVLKQFDDLLVKILIVAA). Over 70–89 (IVSFVLALANGETGLTAFLE) the chain is Lumenal. The helical transmembrane segment at 90–109 (PFVILLILAANAAVGVITET) threads the bilayer. Residues 110 to 250 (NAEKALEELR…DEATPLKKKL (141 aa)) lie on the Cytoplasmic side of the membrane. Residues 251 to 270 (DEFGSFLAKVIAGICVLVWV) traverse the membrane as a helical segment. The Lumenal portion of the chain corresponds to 271 to 291 (VNIGHFSDPSHGGFFKGAIHY). Residues 292–309 (FKIAVALAVAAIPEGLPA) traverse the membrane as a helical segment. The Ca(2+) site is built by V300, A301, I303, and E305. Over 310-746 (VVTTCLALGT…AEGRAIYNNT (437 aa)) the chain is Cytoplasmic. The active-site 4-aspartylphosphate intermediate is D347. Positions 692 and 696 each coordinate Mg(2+). A helical membrane pass occupies residues 747 to 766 (KQFIRYMISSNIGEVVCIFV). Ca(2+) contacts are provided by N757 and E760. Residues 767 to 776 (AAVLGIPDTL) are Lumenal-facing. Residues 777-797 (APVQLLWVNLVTDGLPATAIG) form a helical membrane-spanning segment. Ca(2+) contacts are provided by N785, T788, and D789. Residues 798-817 (FNKQDSDVMKAKPRKVGEAV) lie on the Cytoplasmic side of the membrane. A helical membrane pass occupies residues 818-840 (VTGWLFFRYLVIGVYVGLATVAG). The Lumenal portion of the chain corresponds to 841–883 (FIWWFVYSDGGPKLTYSELMNFETCALRETTYPCSIFEDRHPS). A helical transmembrane segment spans residues 884–903 (TVAMTVLVVVEMFNALNNLS). E894 is a Ca(2+) binding site. Over 904 to 916 (ENQSLLVITPRSN) the chain is Cytoplasmic. A helical transmembrane segment spans residues 917–935 (LWLVGSIILTMLLHVLILY). The Lumenal portion of the chain corresponds to 936-950 (VHPLAVLFSVTPLSW). The chain crosses the membrane as a helical span at residues 951–971 (AEWTAVLYLSFPVIIIDELLK). Residues 972–998 (FLSRNTGMRFRFRLRKADLLPKDRRDK) lie on the Cytoplasmic side of the membrane.

This sequence belongs to the cation transport ATPase (P-type) (TC 3.A.3) family. Type IIA subfamily. As to expression, expressed in root cap, in elongation and differentiation zones of roots, in vascular tissues of roots, leaves, floral pedicels and style, in leaves, including hydathodes and guard cells, in stamens, in petals, in sepals and in siliques.

The protein localises to the golgi apparatus membrane. It is found in the endosome membrane. It localises to the prevacuolar compartment membrane. The enzyme catalyses Ca(2+)(in) + ATP + H2O = Ca(2+)(out) + ADP + phosphate + H(+). In terms of biological role, this magnesium-dependent enzyme catalyzes the hydrolysis of ATP coupled with the translocation of calcium from the cytosol to an endomembrane compartment. Involved in calcium-enhanced root growth, in tolerance to toxic levels of manganese and in secretory processes. Has a crucial role in manganese nutrition, but is not involved in transporting copper, iron or zinc. The sequence is that of Calcium-transporting ATPase 3, endoplasmic reticulum-type from Arabidopsis thaliana (Mouse-ear cress).